Reading from the N-terminus, the 396-residue chain is L-lactate dehydrogenase (396 aa).

The region spanning 1–380 is the FMN hydroxy acid dehydrogenase domain; sequence MIISAASDYR…TQDSLVQGLG (380 aa). Tyr24 is a substrate binding site. The FMN site is built by Ser106 and Gln127. Residue Tyr129 coordinates substrate. Thr155 is an FMN binding site. Arg164 contributes to the substrate binding site. An FMN-binding site is contributed by Lys251. The Proton acceptor role is filled by His275. Arg278 serves as a coordination point for substrate. Residue 306–330 coordinates FMN; it reads DSGIRNGLDVVRMIALGADTVLLGR.

The protein belongs to the FMN-dependent alpha-hydroxy acid dehydrogenase family. FMN is required as a cofactor.

The protein resides in the cell inner membrane. It catalyses the reaction (S)-lactate + A = pyruvate + AH2. Functionally, catalyzes the conversion of L-lactate to pyruvate. Is coupled to the respiratory chain. The polypeptide is L-lactate dehydrogenase (Shigella flexneri serotype 5b (strain 8401)).